A 318-amino-acid polypeptide reads, in one-letter code: METVPKKRDAPVLTAGKGISWMAALKRDKWLYLLLIPGLLYFLIFKYLPMWGVLIAFKDYSPYLGFWKSEWVGFDYFKDFFMNPDFFRLLRNTLMLASLDLLFAFPAPLILALLLNEVRKAVYKRCIQTFIYVPHFVSWTIVVSITFVFFTVDTGVINKLIMSLTGEQISFLSDADWFRPMIVMQSIWKETGWGTILFLAALATVDQEQYEAAIMDGAGRFRRMWHITLPAIRSTIIVLLILRIGSFLNLGFEQVYLMTNSLNRSVADIFDTYVYMMGITQGAYSYSTAVGLFKSVVGIILIFGANYIAKKFDQEGLF.

6 helical membrane-spanning segments follow: residues Leu35–Ile55, Leu94–Leu114, Phe130–Phe150, Ile182–Leu202, Ile236–Tyr256, and Ala289–Ala309. The 216-residue stretch at Leu90–Ala305 folds into the ABC transmembrane type-1 domain.

This sequence belongs to the binding-protein-dependent transport system permease family. MalFG subfamily.

It localises to the cell membrane. This is Protein LplB (lplB) from Bacillus subtilis (strain 168).